The primary structure comprises 161 residues: Large ribosomal subunit protein uL16 (161 aa).

It belongs to the universal ribosomal protein uL16 family.

In Methanosphaera stadtmanae (strain ATCC 43021 / DSM 3091 / JCM 11832 / MCB-3), this protein is Large ribosomal subunit protein uL16.